Consider the following 232-residue polypeptide: Ubiquinone biosynthesis O-methyltransferase (232 aa).

Residues Arg-36, Gly-55, Asp-76, and Leu-120 each contribute to the S-adenosyl-L-methionine site.

It belongs to the methyltransferase superfamily. UbiG/COQ3 family.

It carries out the reaction a 3-demethylubiquinol + S-adenosyl-L-methionine = a ubiquinol + S-adenosyl-L-homocysteine + H(+). The enzyme catalyses a 3-(all-trans-polyprenyl)benzene-1,2-diol + S-adenosyl-L-methionine = a 2-methoxy-6-(all-trans-polyprenyl)phenol + S-adenosyl-L-homocysteine + H(+). The protein operates within cofactor biosynthesis; ubiquinone biosynthesis. Functionally, O-methyltransferase that catalyzes the 2 O-methylation steps in the ubiquinone biosynthetic pathway. The sequence is that of Ubiquinone biosynthesis O-methyltransferase from Stutzerimonas stutzeri (strain A1501) (Pseudomonas stutzeri).